Consider the following 1128-residue polypeptide: Membrane-associated guanylate kinase, WW and PDZ domain-containing protein 3 (1128 aa).

In terms of domain architecture, PDZ 1 spans 22 to 108 (WGGPAGPDPE…PVRLKTVRPG (87 aa)). In terms of domain architecture, Guanylate kinase-like spans 116 to 290 (RHYLSLQFQK…SMDFRNYMSR (175 aa)). 123-130 (FQKGSIDH) provides a ligand contact to ATP. A disordered region spans residues 184–276 (TYDGNFYGTP…DWMKPVPSYN (93 aa)). Residues 193–204 (PKPPAEPSPFQP) show a composition bias toward pro residues. Acidic residues predominate over residues 238–247 (LPEDEEEEEK). The segment covering 257-267 (ENKEKHSDSSD) has biased composition (basic and acidic residues). WW domains follow at residues 295 to 328 (EPLPKNWEMAYTDTGMIYFIDHNTKTTTWLDPRL) and 341 to 374 (GELPYGWEKIEDPQYGTYYVDHINQKTQFENPVL). 2 consecutive PDZ domains span residues 412-494 (RTSL…TLCR) and 581-657 (TIPL…LILR). The segment at 658 to 688 (GGPPSPTKTGKMKDKQESSGSLEALSDAIPQ) is disordered. 2 PDZ domains span residues 728–810 (DVFL…TVRR) and 852–939 (DVCL…VAEE). Disordered regions lie at residues 939–985 (EEHR…GKEV) and 999–1018 (LAQPDAGSASGVGSRHSQAQ). Composition is skewed to polar residues over residues 946-956 (SGTNSAKQSPA) and 965-974 (AQSSASSTDR). Positions 1024-1106 (PVELERGPRG…KVLLLLRPGT (83 aa)) constitute a PDZ 6 domain.

This sequence belongs to the MAGUK family.

The protein resides in the cell membrane. Its subcellular location is the cell junction. It is found in the tight junction. Acts as a scaffolding protein at cell-cell junctions, thereby regulating various cellular and signaling processes. The sequence is that of Membrane-associated guanylate kinase, WW and PDZ domain-containing protein 3 (MAGI3) from Gallus gallus (Chicken).